A 449-amino-acid chain; its full sequence is Neuraminidase (449 aa).

The Intravirion segment spans residues 1-6; that stretch reads MNPNQK. The chain crosses the membrane as a helical span at residues 7–34; the sequence is IITIGSICMVTGIVSLMLQIGNMISIWV. The segment at 11-33 is involved in apical transport and lipid raft association; sequence GSICMVTGIVSLMLQIGNMISIW. Over 35 to 449 the chain is Virion surface; it reads SHSIHTGNQH…GAELPFTIDK (415 aa). The segment at 36–70 is hypervariable stalk region; that stretch reads HSIHTGNQHQSEPISNTNFLTEKAVASVKLAGNSS. The segment at 71–449 is head of neuraminidase; sequence LCPINGWAVY…GAELPFTIDK (379 aa). 8 disulfides stabilise this stretch: C72–C397, C104–C109, C164–C211, C213–C218, C259–C272, C261–C270, C298–C315, and C401–C426. Residue R98 participates in substrate binding. D131 functions as the Proton donor/acceptor in the catalytic mechanism. R132 contacts substrate. 257–258 contacts substrate; sequence EE. Residue R273 coordinates substrate. The Ca(2+) site is built by D274, G278, D304, G322, and Y324. Position 348 (R348) interacts with substrate. Y382 (nucleophile) is an active-site residue.

This sequence belongs to the glycosyl hydrolase 34 family. Homotetramer. The cofactor is Ca(2+). N-glycosylated.

It localises to the virion membrane. Its subcellular location is the host apical cell membrane. The catalysed reaction is Hydrolysis of alpha-(2-&gt;3)-, alpha-(2-&gt;6)-, alpha-(2-&gt;8)- glycosidic linkages of terminal sialic acid residues in oligosaccharides, glycoproteins, glycolipids, colominic acid and synthetic substrates.. Inhibited by the neuraminidase inhibitors zanamivir (Relenza) and oseltamivir (Tamiflu). These drugs interfere with the release of progeny virus from infected cells and are effective against all influenza strains. Resistance to neuraminidase inhibitors is quite rare. Functionally, catalyzes the removal of terminal sialic acid residues from viral and cellular glycoconjugates. Cleaves off the terminal sialic acids on the glycosylated HA during virus budding to facilitate virus release. Additionally helps virus spread through the circulation by further removing sialic acids from the cell surface. These cleavages prevent self-aggregation and ensure the efficient spread of the progeny virus from cell to cell. Otherwise, infection would be limited to one round of replication. Described as a receptor-destroying enzyme because it cleaves a terminal sialic acid from the cellular receptors. May facilitate viral invasion of the upper airways by cleaving the sialic acid moities on the mucin of the airway epithelial cells. Likely to plays a role in the budding process through its association with lipid rafts during intracellular transport. May additionally display a raft-association independent effect on budding. Plays a role in the determination of host range restriction on replication and virulence. Sialidase activity in late endosome/lysosome traffic seems to enhance virus replication. This is Neuraminidase from Influenza A virus (strain A/Vietnam/1203/2004 H5N1).